We begin with the raw amino-acid sequence, 305 residues long: Virulence plasmid integrase pGP7-D (305 aa).

Residues leucine 13 to tyrosine 99 form the Core-binding (CB) domain. One can recognise a Tyr recombinase domain in the interval isoleucine 127–leucine 305. Catalysis depends on residues lysine 188 and arginine 257. Residue tyrosine 289 is the O-(3'-phospho-DNA)-tyrosine intermediate of the active site.

The protein belongs to the 'phage' integrase family.

This is Virulence plasmid integrase pGP7-D from Chlamydia trachomatis serovar L2 (strain ATCC VR-902B / DSM 19102 / 434/Bu).